A 477-amino-acid polypeptide reads, in one-letter code: UDP-N-acetylmuramate--L-alanine ligase (477 aa).

122–128 contributes to the ATP binding site; that stretch reads GTHGKTT.

This sequence belongs to the MurCDEF family.

The protein resides in the cytoplasm. It catalyses the reaction UDP-N-acetyl-alpha-D-muramate + L-alanine + ATP = UDP-N-acetyl-alpha-D-muramoyl-L-alanine + ADP + phosphate + H(+). The protein operates within cell wall biogenesis; peptidoglycan biosynthesis. Cell wall formation. This chain is UDP-N-acetylmuramate--L-alanine ligase, found in Xanthomonas euvesicatoria pv. vesicatoria (strain 85-10) (Xanthomonas campestris pv. vesicatoria).